The chain runs to 119 residues: Large ribosomal subunit protein bL20 (119 aa).

This sequence belongs to the bacterial ribosomal protein bL20 family.

Functionally, binds directly to 23S ribosomal RNA and is necessary for the in vitro assembly process of the 50S ribosomal subunit. It is not involved in the protein synthesizing functions of that subunit. The polypeptide is Large ribosomal subunit protein bL20 (Alkaliphilus oremlandii (strain OhILAs) (Clostridium oremlandii (strain OhILAs))).